The primary structure comprises 88 residues: Large ribosomal subunit protein bL27 (88 aa).

A disordered region spans residues 1-24 (MAHKKAGGSSRNGRDSAGQRRGVK).

The protein belongs to the bacterial ribosomal protein bL27 family.

The protein is Large ribosomal subunit protein bL27 of Syntrophobacter fumaroxidans (strain DSM 10017 / MPOB).